Here is a 155-residue protein sequence, read N- to C-terminus: UPF0178 protein ACICU_02858 (155 aa).

Residues 120–155 (GAGVQTGGPPPISERDKREFSSALDQTILKQKRKTA) are disordered.

The protein belongs to the UPF0178 family.

The chain is UPF0178 protein ACICU_02858 from Acinetobacter baumannii (strain ACICU).